The chain runs to 222 residues: Peroxiredoxin (222 aa).

The Thioredoxin domain occupies 7–163 (PRLGEPAPAF…VIRLVDALQT (157 aa)). Cys-49 functions as the Cysteine sulfenic acid (-SOH) intermediate in the catalytic mechanism. Residue Arg-126 participates in substrate binding. The cysteines at positions 212 and 218 are disulfide-linked.

The protein belongs to the peroxiredoxin family. Prx6 subfamily. In terms of assembly, homodecamer. Pentamer of dimers that assemble into a ring structure.

It is found in the cytoplasm. It carries out the reaction a hydroperoxide + [thioredoxin]-dithiol = an alcohol + [thioredoxin]-disulfide + H2O. Functionally, thiol-specific peroxidase that catalyzes the reduction of hydrogen peroxide and organic hydroperoxides to water and alcohols, respectively. Plays a role in cell protection against oxidative stress by detoxifying peroxides. The chain is Peroxiredoxin from Aquifex aeolicus (strain VF5).